Here is a 140-residue protein sequence, read N- to C-terminus: Endoribonuclease YbeY (140 aa).

3 residues coordinate Zn(2+): histidine 101, histidine 105, and histidine 111.

This sequence belongs to the endoribonuclease YbeY family. The cofactor is Zn(2+).

The protein resides in the cytoplasm. Its function is as follows. Single strand-specific metallo-endoribonuclease involved in late-stage 70S ribosome quality control and in maturation of the 3' terminus of the 16S rRNA. This Aliarcobacter butzleri (strain RM4018) (Arcobacter butzleri) protein is Endoribonuclease YbeY.